The chain runs to 289 residues: 4-hydroxy-tetrahydrodipicolinate synthase (289 aa).

Thr-42 is a pyruvate binding site. Residue Tyr-129 is the Proton donor/acceptor of the active site. Residue Lys-157 is the Schiff-base intermediate with substrate of the active site. Ile-198 is a pyruvate binding site.

This sequence belongs to the DapA family. In terms of assembly, homotetramer; dimer of dimers.

It is found in the cytoplasm. It carries out the reaction L-aspartate 4-semialdehyde + pyruvate = (2S,4S)-4-hydroxy-2,3,4,5-tetrahydrodipicolinate + H2O + H(+). It participates in amino-acid biosynthesis; L-lysine biosynthesis via DAP pathway; (S)-tetrahydrodipicolinate from L-aspartate: step 3/4. In terms of biological role, catalyzes the condensation of (S)-aspartate-beta-semialdehyde [(S)-ASA] and pyruvate to 4-hydroxy-tetrahydrodipicolinate (HTPA). The polypeptide is 4-hydroxy-tetrahydrodipicolinate synthase (Chlamydia caviae (strain ATCC VR-813 / DSM 19441 / 03DC25 / GPIC) (Chlamydophila caviae)).